The following is a 211-amino-acid chain: Thiamine-phosphate synthase (211 aa).

4-amino-2-methyl-5-(diphosphooxymethyl)pyrimidine is bound by residues 44–48 (QYRNK) and N75. Residues D76 and D95 each contribute to the Mg(2+) site. S114 lines the 4-amino-2-methyl-5-(diphosphooxymethyl)pyrimidine pocket. 140–142 (TKS) serves as a coordination point for 2-[(2R,5Z)-2-carboxy-4-methylthiazol-5(2H)-ylidene]ethyl phosphate. K143 is a 4-amino-2-methyl-5-(diphosphooxymethyl)pyrimidine binding site. G171 contacts 2-[(2R,5Z)-2-carboxy-4-methylthiazol-5(2H)-ylidene]ethyl phosphate.

The protein belongs to the thiamine-phosphate synthase family. Requires Mg(2+) as cofactor.

It carries out the reaction 2-[(2R,5Z)-2-carboxy-4-methylthiazol-5(2H)-ylidene]ethyl phosphate + 4-amino-2-methyl-5-(diphosphooxymethyl)pyrimidine + 2 H(+) = thiamine phosphate + CO2 + diphosphate. The enzyme catalyses 2-(2-carboxy-4-methylthiazol-5-yl)ethyl phosphate + 4-amino-2-methyl-5-(diphosphooxymethyl)pyrimidine + 2 H(+) = thiamine phosphate + CO2 + diphosphate. It catalyses the reaction 4-methyl-5-(2-phosphooxyethyl)-thiazole + 4-amino-2-methyl-5-(diphosphooxymethyl)pyrimidine + H(+) = thiamine phosphate + diphosphate. The protein operates within cofactor biosynthesis; thiamine diphosphate biosynthesis; thiamine phosphate from 4-amino-2-methyl-5-diphosphomethylpyrimidine and 4-methyl-5-(2-phosphoethyl)-thiazole: step 1/1. Its function is as follows. Condenses 4-methyl-5-(beta-hydroxyethyl)thiazole monophosphate (THZ-P) and 2-methyl-4-amino-5-hydroxymethyl pyrimidine pyrophosphate (HMP-PP) to form thiamine monophosphate (TMP). This is Thiamine-phosphate synthase from Koribacter versatilis (strain Ellin345).